A 120-amino-acid polypeptide reads, in one-letter code: SAGA-associated factor 11 (120 aa).

Low complexity predominate over residues 40 to 60 (SLLNSSNSNTNSNTNGTIASN). The disordered stretch occupies residues 40 to 82 (SLLNSSNSNTNSNTNGTIASNGGNGTTSDENNEIENSTIQDKS). Residues 93–114 (FRCLNCGRNIAGGRFASHISKC) form an SGF11-type zinc finger.

The protein belongs to the SGF11 family. As to quaternary structure, component of the 1.8 MDa SAGA transcription coactivator-HAT complex. SAGA is built of 5 distinct domains with specialized functions. Within the SAGA complex, SUS1, SGF11, SGF73 and UBP8 form an additional subcomplex of SAGA called the DUB module (deubiquitination module). Interacts directly with SGF73, SUS1 and UBP8.

Its subcellular location is the nucleus. In terms of biological role, functions as a component of the transcription regulatory histone acetylation (HAT) complex SAGA. At the promoters, SAGA is required for recruitment of the basal transcription machinery. It influences RNA polymerase II transcriptional activity through different activities such as TBP interaction and promoter selectivity, interaction with transcription activators, and chromatin modification through histone acetylation and deubiquitination. SAGA acetylates nucleosomal histone H3 to some extent (to form H3K9ac, H3K14ac, H3K18ac and H3K23ac). SAGA interacts with DNA via upstream activating sequences (UASs). Involved in transcriptional regulation of a subset of SAGA-regulated genes. Within the SAGA complex, participates in a subcomplex, that specifically deubiquitinates histones H2B. This is SAGA-associated factor 11 from Candida albicans (strain SC5314 / ATCC MYA-2876) (Yeast).